Here is a 247-residue protein sequence, read N- to C-terminus: OCIA domain-containing protein 1 (247 aa).

The OCIA domain maps to 1–112 (MNGRADFREP…KKLENSPLGE (112 aa)). Serine 108 and serine 116 each carry phosphoserine. Residues 116–247 (SGELRRSLPP…VNKYGDTWDE (132 aa)) form a disordered region. Composition is skewed to polar residues over residues 136-146 (SNVSGQSSFGT) and 168-177 (ASMNESTPTG). 2 stretches are compositionally biased toward basic and acidic residues: residues 192–210 (DSPK…KNRE) and 218–240 (HKTD…KVNK). 2 positions are modified to phosphoserine: serine 193 and serine 198.

The protein belongs to the OCIAD1 family. Interacts with OCIAD2. Interacts with STAT3.

The protein localises to the endosome. Functionally, maintains stem cell potency. Increases STAT3 phosphorylation and controls ERK phosphorylation. May act as a scaffold, increasing STAT3 recruitment onto endosomes. The polypeptide is OCIA domain-containing protein 1 (Rattus norvegicus (Rat)).